A 407-amino-acid chain; its full sequence is Putative cystathionine beta-lyase (407 aa).

Lysine 237 carries the N6-(pyridoxal phosphate)lysine modification.

This sequence belongs to the class-II pyridoxal-phosphate-dependent aminotransferase family. MalY/PatB cystathionine beta-lyase subfamily. It depends on pyridoxal 5'-phosphate as a cofactor.

The enzyme catalyses L,L-cystathionine + H2O = L-homocysteine + pyruvate + NH4(+). It carries out the reaction an S-substituted L-cysteine + H2O = a thiol + pyruvate + NH4(+). It functions in the pathway amino-acid biosynthesis; L-methionine biosynthesis via de novo pathway; L-homocysteine from L-cystathionine: step 1/1. The polypeptide is Putative cystathionine beta-lyase (Mycobacterium tuberculosis (strain CDC 1551 / Oshkosh)).